Here is a 331-residue protein sequence, read N- to C-terminus: Tungstate uptake system ATP-binding protein TupC (331 aa).

Residues 2 to 230 (IEISNLFFNY…NQGVKFCNFI (229 aa)) enclose the ABC transporter domain. 34 to 41 (GANGSGKS) contacts ATP.

It belongs to the ABC transporter superfamily. The complex is composed of two ATP-binding proteins (TupC), two transmembrane proteins (TupB) and a solute-binding protein (TupA).

It carries out the reaction tungstate(in) + ATP + H2O = tungstate(out) + ADP + phosphate + H(+). Its function is as follows. Part of an ABC transporter complex involved in ultra-high affinity tungstate uptake. Probably responsible for energy coupling to the transport system. The chain is Tungstate uptake system ATP-binding protein TupC from Campylobacter jejuni subsp. jejuni serotype O:2 (strain ATCC 700819 / NCTC 11168).